A 199-amino-acid chain; its full sequence is WASH complex subunit 3 (199 aa).

A coiled-coil region spans residues 47–76; it reads VCEEKLSALSLRIQQIETTLNILEAKLSSI. Positions 93-120 are enriched in polar residues; that stretch reads NISNGHLPSQPDAQSVVVSPQSDNNSMN. 2 disordered regions span residues 93 to 136 and 170 to 199; these read NISN…NITT and PDLL…SFSD. The segment covering 183–192 has biased composition (acidic residues); sequence GEPEAEESSD.

Belongs to the CCDC53 family. In terms of assembly, component of the WASH complex.

The protein is WASH complex subunit 3 of Xenopus laevis (African clawed frog).